The chain runs to 325 residues: Homocysteine S-methyltransferase 2 (325 aa).

One can recognise a Hcy-binding domain in the interval 6-321 (LKQFLADNPK…KDIQEISAAV (316 aa)). A Phosphothreonine modification is found at threonine 138. Cysteine 239, cysteine 306, and cysteine 307 together coordinate Zn(2+).

Zn(2+) is required as a cofactor.

It is found in the cytoplasm. The protein resides in the nucleus. The enzyme catalyses S-methyl-L-methionine + L-homocysteine = 2 L-methionine + H(+). Homocysteine S-methyltransferase involved in the conversion of S-adenosylmethionine (AdoMet) to methionine to control the methionine/AdoMet ratio. Also converts S-methylmethionine (SMM) to methionine. In Saccharomyces cerevisiae (strain ATCC 204508 / S288c) (Baker's yeast), this protein is Homocysteine S-methyltransferase 2 (SAM4).